The chain runs to 476 residues: Siroheme synthase (476 aa).

The tract at residues M1–L207 is precorrin-2 dehydrogenase /sirohydrochlorin ferrochelatase. Residues K25–V26 and P46–S47 contribute to the NAD(+) site. At S132 the chain carries Phosphoserine. The tract at residues G220 to L476 is uroporphyrinogen-III C-methyltransferase. D252 functions as the Proton acceptor in the catalytic mechanism. The Proton donor role is filled by K274. S-adenosyl-L-methionine is bound by residues G305 to D307, V310, T335 to A336, M387, and G416.

It in the N-terminal section; belongs to the precorrin-2 dehydrogenase / sirohydrochlorin ferrochelatase family. In the C-terminal section; belongs to the precorrin methyltransferase family.

It carries out the reaction uroporphyrinogen III + 2 S-adenosyl-L-methionine = precorrin-2 + 2 S-adenosyl-L-homocysteine + H(+). It catalyses the reaction precorrin-2 + NAD(+) = sirohydrochlorin + NADH + 2 H(+). The catalysed reaction is siroheme + 2 H(+) = sirohydrochlorin + Fe(2+). The protein operates within cofactor biosynthesis; adenosylcobalamin biosynthesis; precorrin-2 from uroporphyrinogen III: step 1/1. It participates in cofactor biosynthesis; adenosylcobalamin biosynthesis; sirohydrochlorin from precorrin-2: step 1/1. Its pathway is porphyrin-containing compound metabolism; siroheme biosynthesis; precorrin-2 from uroporphyrinogen III: step 1/1. It functions in the pathway porphyrin-containing compound metabolism; siroheme biosynthesis; siroheme from sirohydrochlorin: step 1/1. The protein operates within porphyrin-containing compound metabolism; siroheme biosynthesis; sirohydrochlorin from precorrin-2: step 1/1. Functionally, multifunctional enzyme that catalyzes the SAM-dependent methylations of uroporphyrinogen III at position C-2 and C-7 to form precorrin-2 via precorrin-1. Then it catalyzes the NAD-dependent ring dehydrogenation of precorrin-2 to yield sirohydrochlorin. Finally, it catalyzes the ferrochelation of sirohydrochlorin to yield siroheme. The chain is Siroheme synthase from Xylella fastidiosa (strain 9a5c).